We begin with the raw amino-acid sequence, 53 residues long: Lantibiotic mutacin-2 (53 aa).

Residues 1–26 constitute a propeptide that is removed on maturation; it reads MNKLNSNAVVSLNEVSDSELDTILGG. The beta-methyllanthionine (Thr-Cys) cross-link spans 36-41; that stretch reads TVSYEC. 2 cross-links (lanthionine (Ser-Cys)) span residues 38–52 and 45–53; these read SYECRMNSWQHVFTC and SWQHVFTCC. Thr51 carries the post-translational modification 2,3-didehydrobutyrine.

In terms of processing, maturation of lantibiotics involves the enzymatic conversion of Thr, and Ser into dehydrated AA and the formation of thioether bonds with cysteine. This is followed by membrane translocation and cleavage of the modified precursor. It is not established whether the 2,3-didehydrobutyrine is the E- or Z-isomer.

Lanthionine-containing peptide antibiotic (lantibiotic) active on Gram-positive bacteria including M.luteus, S.aureus, Streptococcus, P.micros, P.acidilactici, C.sporogenes, C.diphtheriae, A.viscosus, G.vaginalis, P.acnes, L.monocytogenes and M.smegmatis, and Gram-negative bacteria including C.jejuni, H.pylori and N.gonorrhoeae. Transiently and partially depolarizes the transmembrane electrical potential and pH gradient of susceptible cells, inhibits the uptake of amino acids and depletes the intracellular ATP pool. The chain is Lantibiotic mutacin-2 from Streptococcus mutans.